The primary structure comprises 163 residues: Cytochrome c-type biogenesis protein CcmE (163 aa).

Residues 1-7 (MTRKQRR) lie on the Cytoplasmic side of the membrane. Residues 8 to 28 (LVFIGTCGAVLAVALGLVLWA) traverse the membrane as a helical; Signal-anchor for type II membrane protein segment. Residues 29–163 (MSGTIVFFRS…RTASGEARAP (135 aa)) lie on the Periplasmic side of the membrane. Positions 122 and 126 each coordinate heme. The disordered stretch occupies residues 134-163 (ALKKSGRWQEGAGHPAPAPPRTASGEARAP).

It belongs to the CcmE/CycJ family.

The protein localises to the cell inner membrane. In terms of biological role, heme chaperone required for the biogenesis of c-type cytochromes. Transiently binds heme delivered by CcmC and transfers the heme to apo-cytochromes in a process facilitated by CcmF and CcmH. This Methylobacterium sp. (strain 4-46) protein is Cytochrome c-type biogenesis protein CcmE.